A 141-amino-acid chain; its full sequence is Large ribosomal subunit protein uL11 (141 aa).

It belongs to the universal ribosomal protein uL11 family. Part of the ribosomal stalk of the 50S ribosomal subunit. Interacts with L10 and the large rRNA to form the base of the stalk. L10 forms an elongated spine to which L12 dimers bind in a sequential fashion forming a multimeric L10(L12)X complex. One or more lysine residues are methylated.

In terms of biological role, forms part of the ribosomal stalk which helps the ribosome interact with GTP-bound translation factors. The protein is Large ribosomal subunit protein uL11 of Roseiflexus castenholzii (strain DSM 13941 / HLO8).